A 155-amino-acid chain; its full sequence is Protein phosphatase 1 regulatory subunit 17 (155 aa).

The tract at residues 41–73 is disordered; it reads KKKPRKGKNVQATLNVESDQKKPRRKDTPALHI. Residues 58–69 show a composition bias toward basic and acidic residues; it reads SDQKKPRRKDTP. Phosphothreonine; by PKG/PRKG1 is present on residues Thr68 and Thr119.

Post-translationally, substrate for cGMP-dependent protein kinase. Phosphorylated by PRKG1 isoform alpha. Phosphorylation of Thr-68 and Thr-119 is required for its phosphatase activity. In terms of processing, substrate for cGMP-dependent protein kinase. In terms of tissue distribution, highly expressed in cerebellum.

Functionally, inhibits phosphatase activities of protein phosphatase 1 (PP1) and protein phosphatase 2A (PP2A) complexes. In Homo sapiens (Human), this protein is Protein phosphatase 1 regulatory subunit 17 (PPP1R17).